Consider the following 347-residue polypeptide: Phosphate acyltransferase (347 aa).

The protein belongs to the PlsX family. Homodimer. Probably interacts with PlsY.

The protein localises to the cytoplasm. It carries out the reaction a fatty acyl-[ACP] + phosphate = an acyl phosphate + holo-[ACP]. It functions in the pathway lipid metabolism; phospholipid metabolism. In terms of biological role, catalyzes the reversible formation of acyl-phosphate (acyl-PO(4)) from acyl-[acyl-carrier-protein] (acyl-ACP). This enzyme utilizes acyl-ACP as fatty acyl donor, but not acyl-CoA. The sequence is that of Phosphate acyltransferase from Sinorhizobium medicae (strain WSM419) (Ensifer medicae).